The chain runs to 333 residues: tRNA N6-adenosine threonylcarbamoyltransferase (333 aa).

Positions 111 and 115 each coordinate Fe cation. Residues 134-138, Asp167, Gly180, and Asn272 each bind substrate; that span reads LVSGG. Fe cation is bound at residue Asp300.

This sequence belongs to the KAE1 / TsaD family. Fe(2+) is required as a cofactor.

It is found in the cytoplasm. The enzyme catalyses L-threonylcarbamoyladenylate + adenosine(37) in tRNA = N(6)-L-threonylcarbamoyladenosine(37) in tRNA + AMP + H(+). Required for the formation of a threonylcarbamoyl group on adenosine at position 37 (t(6)A37) in tRNAs that read codons beginning with adenine. Is involved in the transfer of the threonylcarbamoyl moiety of threonylcarbamoyl-AMP (TC-AMP) to the N6 group of A37, together with TsaE and TsaB. TsaD likely plays a direct catalytic role in this reaction. This Legionella pneumophila (strain Lens) protein is tRNA N6-adenosine threonylcarbamoyltransferase.